We begin with the raw amino-acid sequence, 327 residues long: WRKY transcription factor WRKY76 (327 aa).

A coiled-coil region spans residues 56–76 (AKILEAKVTQMSEENRRLTEV). Residues 88 to 134 (LGLDGSASPPRPVSPLSGKKRSRESMETANSCDANSNRHQGGDADHA) are disordered. The short motif at 106-112 (KKRSRES) is the Nuclear localization signal element. A compositionally biased stretch (polar residues) spans 114–126 (ETANSCDANSNRH). The WRKY DNA-binding region spans 160–226 (DTSLVVKDGY…YEGEHNHPHP (67 aa)).

The protein belongs to the WRKY group II-a family.

The protein resides in the nucleus. Functionally, transcription repressor. Interacts specifically with the W box (5'-(T)TGAC[CT]-3'), a frequently occurring elicitor-responsive cis-acting element. Regulates, probably indirectly, the activation of defense-related genes during defense response. Modulates plant innate immunity against X.oryzae pv. oryzae (Xoo). The polypeptide is WRKY transcription factor WRKY76 (Oryza sativa subsp. indica (Rice)).